The primary structure comprises 579 residues: Folliculin (579 aa).

A disordered region spans residues Gly32–Cys82. A phosphoserine mark is found at Ser62 and Ser73. The uDENN FLCN/SMCR8-type domain maps to Arg86–Thr242. Positions Glu287 to Ala310 form a coiled coil. Residues Glu294 to Glu308 are compositionally biased toward acidic residues. The segment at Glu294–Arg320 is disordered. Residues Ser302, Ser406, Ser537, Ser542, and Ser571 each carry the phosphoserine modification. In terms of domain architecture, cDENN FLCN/SMCR8-type spans Gln339–Thr491. In terms of domain architecture, dDENN FLCN/SMCR8-type spans Gln493–Ser558.

The protein belongs to the folliculin family. Interacts (via C-terminus) with FNIP1 or FNIP2 (via C-terminus). Component of the lysosomal folliculin complex (LFC), composed of FLCN, FNIP1 (or FNIP2), RagA/RRAGA or RagB/RRAGB GDP-bound, RagC/RRAGC or RagD/RRAGD GTP-bound, and Ragulator. Interaction with FNIP1 or FNIP2 mediates indirect interaction with the PRKAA1, PRKAB1 and PRKAG1 subunits of 5'-AMP-activated protein kinase (AMPK). Interacts with HSP90AA1 in the presence of FNIP1. Interacts with HSP70, STUB1, CDC37, AHSA1, CCT2, STIP1, PTGES3 and PPP5C. Interacts with GABARAP; interaction takes place in the presence of FNIP1 and/or FNIP2. Interacts with RILP; the interaction is direct and promotes association between RILP and RAB34. Interacts with KIF3A and KIF3B. Interacts with lactate dehydrogenase LDHA, but not LDHB; the interaction is direct, may preferentially bind LDHA dimers rather than tetramers, and regulates LDHA activity, acting as an uncompetitive inhibitor. Phosphorylation by ULK1 modulates the interaction with GABARAP and is required to regulate autophagy. In terms of tissue distribution, expressed in kidney.

The protein localises to the lysosome membrane. Its subcellular location is the cytoplasm. It is found in the cytosol. The protein resides in the cell projection. It localises to the cilium. The protein localises to the cytoskeleton. Its subcellular location is the microtubule organizing center. It is found in the centrosome. The protein resides in the spindle. It localises to the nucleus. GTPase-activating activity is inhibited in the folliculin complex (LFC), which stabilizes the GDP-bound state of RagA/RRAGA (or RagB/RRAGB), because Arg-164 is located far from the RagC/RRAGC or RagD/RRAGD nucleotide pocket. Disassembly of the LFC complex upon amino acid restimulation liberates the GTPase-activating activity. In terms of biological role, multi-functional protein, involved in both the cellular response to amino acid availability and in the regulation of glycolysis. GTPase-activating protein that plays a key role in the cellular response to amino acid availability through regulation of the non-canonical mTORC1 signaling cascade controlling the MiT/TFE factors TFEB and TFE3. Activates mTORC1 by acting as a GTPase-activating protein: specifically stimulates GTP hydrolysis by RagC/RRAGC or RagD/RRAGD, promoting the conversion to the GDP-bound state of RagC/RRAGC or RagD/RRAGD, and thereby activating the kinase activity of mTORC1. The GTPase-activating activity is inhibited during starvation and activated in presence of nutrients. Acts as a key component for non-canonical mTORC1-dependent control of the MiT/TFE factors TFEB and TFE3, while it is not involved in mTORC1-dependent phosphorylation of canonical RPS6KB1/S6K1 and EIF4EBP1/4E-BP1. In low-amino acid conditions, the lysosomal folliculin complex (LFC) is formed on the membrane of lysosomes, which inhibits the GTPase-activating activity of FLCN, inactivates mTORC1 and maximizes nuclear translocation of TFEB and TFE3. Upon amino acid restimulation, RagA/RRAGA (or RagB/RRAGB) nucleotide exchange promotes disassembly of the LFC complex and liberates the GTPase-activating activity of FLCN, leading to activation of mTORC1 and subsequent cytoplasmic retention of TFEB and TFE3. Indirectly acts as a positive regulator of Wnt signaling by promoting mTOR-dependent cytoplasmic retention of MiT/TFE factor TFE3. Required for the exit of hematopoietic stem cell from pluripotency by promoting mTOR-dependent cytoplasmic retention of TFE3, thereby increasing Wnt signaling. Involved in the control of embryonic stem cells differentiation; together with LAMTOR1 it is necessary to recruit and activate RagC/RRAGC and RagD/RRAGD at the lysosomes, and to induce exit of embryonic stem cells from pluripotency via non-canonical, mTOR-independent TFE3 inactivation. Acts as an inhibitor of browning of adipose tissue by regulating mTOR-dependent cytoplasmic retention of TFE3. In response to flow stress, regulates STK11/LKB1 accumulation and mTORC1 activation through primary cilia: may act by recruiting STK11/LKB1 to primary cilia for activation of AMPK resided at basal bodies, causing mTORC1 down-regulation. Together with FNIP1 and/or FNIP2, regulates autophagy: following phosphorylation by ULK1, interacts with GABARAP and promotes autophagy. Required for starvation-induced perinuclear clustering of lysosomes by promoting association of RILP with its effector RAB34. Regulates glycolysis by binding to lactate dehydrogenase LDHA, acting as an uncompetitive inhibitor. This is Folliculin from Rattus norvegicus (Rat).